A 250-amino-acid chain; its full sequence is MVFEENSDEVRVITLDHPNKHNPFSRTLETSVKDALARANADDSVRAVVVYGGAERSFSAGGDFNEVKQLSRSEDIEEWIDRVIDLYQAVLNVNKPTIAAVDGYAIGMGFQFALMFDQRLMASTANFVMPELKHGIGCSVGAAILGFTHGFSTMQEIIYQCQSLDAPRCVDYRLVNQVVESSALLDAAITQAHVMASYPASAFINTKRAVNKPFIHLLEQTRDASKAVHKAAFQARDAQGHFKNVLGKKY.

60-64 (AGGDF) is a binding site for malonyl-CoA.

It belongs to the enoyl-CoA hydratase/isomerase family. As to quaternary structure, homotrimer.

It carries out the reaction (S)-1-pyrroline-5-carboxylate + malonyl-CoA + H2O + H(+) = (2S,5S)-5-carboxymethylproline + CO2 + CoA. It participates in antibiotic biosynthesis; carbapenem biosynthesis. Catalyzes the formation of (2S,5S)-carboxymethylproline (t-CMP) from malonyl-CoA and (S)-1-pyrroline-5-carboxylate, the first step in the biosynthesis of (5R)-carbapen-2-em-3-carboxylate, a beta-lactam antibiotic of the carbapenem class. Also catalyzes the independent decarboxylation of malonyl-CoA and methylmalonyl-CoA and the hydrolysis of CoA esters such as acetyl-CoA and propionyl-CoA. Catalyzes the reaction with a C2 epimeric mixture of methylmalonyl-CoA to give a 55:45 mixture of (6R)- and (6S)-epimers of 6-methyl-t-CMP, under standard incubation conditions. The sequence is that of Carboxymethylproline synthase from Pectobacterium carotovorum subsp. carotovorum (Erwinia carotovora subsp. carotovora).